We begin with the raw amino-acid sequence, 95 residues long: Osteocalcin-2 (95 aa).

The N-terminal stretch at 1–23 is a signal peptide; that stretch reads MRTLSLLTLLALAALCLSDLTDA. Residues 24–49 constitute a propeptide that is removed on maturation; it reads KPSGPESDKAFMSKQEGNKVVNRLRR. One can recognise a Gla domain in the interval 46–92; that stretch reads RLRRYLGASVPSPDPLEPTREQCELNPACDELSDQYGLKTAYKRIYG. Ca(2+)-binding residues include glutamate 62, glutamate 66, glutamate 69, and aspartate 75. Residues cysteine 68 and cysteine 74 are joined by a disulfide bond.

This sequence belongs to the osteocalcin/matrix Gla protein family. Gamma-carboxyglutamate residues are formed by vitamin K dependent carboxylation by GGCX. These residues are essential for the binding of calcium. Carboxylated in a Ptprv/Esp-dependent process. Decarboxylation promotes the hormone activity. Bone.

It localises to the secreted. In terms of biological role, the carboxylated form is one of the main organic components of the bone matrix, which constitutes 1-2% of the total bone protein: it acts as a negative regulator of bone formation and is required to limit bone formation without impairing bone resorption or mineralization. The carboxylated form binds strongly to apatite and calcium. Functionally, the uncarboxylated form acts as a hormone secreted by osteoblasts, which regulates different cellular processes, such as energy metabolism, male fertility and brain development. Regulates of energy metabolism by acting as a hormone favoring pancreatic beta-cell proliferation, insulin secretion and sensitivity and energy expenditure. Uncarboxylated osteocalcin hormone also promotes testosterone production in the testes: acts as a ligand for G protein-coupled receptor GPRC6A at the surface of Leydig cells, initiating a signaling response that promotes the expression of enzymes required for testosterone synthesis in a CREB-dependent manner. Also acts as a regulator of brain development: osteocalcin hormone crosses the blood-brain barrier and acts as a ligand for GPR158 on neurons, initiating a signaling response that prevents neuronal apoptosis in the hippocampus, favors the synthesis of all monoamine neurotransmitters and inhibits that of gamma-aminobutyric acid (GABA). Osteocalcin also crosses the placenta during pregnancy and maternal osteocalcin is required for fetal brain development. The polypeptide is Osteocalcin-2 (Bglap2) (Mus musculus (Mouse)).